Here is a 57-residue protein sequence, read N- to C-terminus: Plasma membrane proteolipid 3 (57 aa).

Residues 34–54 (INILLTILGYLPGIVHALYII) form a helical membrane-spanning segment.

Belongs to the UPF0057 (PMP3) family.

The protein resides in the cell membrane. Plays a role in the regulation of membrane potential. Could mediate a proton leak. The polypeptide is Plasma membrane proteolipid 3 (pmp-1) (Neurospora crassa (strain ATCC 24698 / 74-OR23-1A / CBS 708.71 / DSM 1257 / FGSC 987)).